A 262-amino-acid polypeptide reads, in one-letter code: Pyridoxine 5'-phosphate synthase (262 aa).

Asn-6 provides a ligand contact to 3-amino-2-oxopropyl phosphate. 8-9 is a 1-deoxy-D-xylulose 5-phosphate binding site; that stretch reads DH. Arg-17 contacts 3-amino-2-oxopropyl phosphate. The active-site Proton acceptor is His-43. 1-deoxy-D-xylulose 5-phosphate-binding residues include Arg-45 and His-50. Catalysis depends on Glu-70, which acts as the Proton acceptor. 1-deoxy-D-xylulose 5-phosphate is bound at residue Thr-102. The active-site Proton donor is the His-215. 3-amino-2-oxopropyl phosphate contacts are provided by residues Gly-216 and 237–238; that span reads GH.

Belongs to the PNP synthase family. As to quaternary structure, homooctamer; tetramer of dimers.

Its subcellular location is the cytoplasm. It carries out the reaction 3-amino-2-oxopropyl phosphate + 1-deoxy-D-xylulose 5-phosphate = pyridoxine 5'-phosphate + phosphate + 2 H2O + H(+). The protein operates within cofactor biosynthesis; pyridoxine 5'-phosphate biosynthesis; pyridoxine 5'-phosphate from D-erythrose 4-phosphate: step 5/5. Functionally, catalyzes the complicated ring closure reaction between the two acyclic compounds 1-deoxy-D-xylulose-5-phosphate (DXP) and 3-amino-2-oxopropyl phosphate (1-amino-acetone-3-phosphate or AAP) to form pyridoxine 5'-phosphate (PNP) and inorganic phosphate. The protein is Pyridoxine 5'-phosphate synthase of Helicobacter pylori (strain G27).